The chain runs to 565 residues: Probable protease Gilli_2517 (565 aa).

Functionally, probably a dedicated protease for substrate gasdermin bGSDM; cleaves the bGSDM precursor, releasing the pore-forming moiety, which integrates into the membrane and triggers cell death. Involved in defense against bacteriophages. Expression of bGSDM and this neighboring protease is not toxic in E.coli. This is Probable protease Gilli_2517 from Gillisia limnaea (strain DSM 15749 / LMG 21470 / R-8282).